The chain runs to 396 residues: Growth-regulating factor 1 (396 aa).

Residues 18–53 (PFTASQWQELEHQALIYKYMASGTPIPSDLILPLRR) form the QLQ domain. Short sequence motifs (bipartite nuclear localization signal) lie at residues 86–105 (RKAE…KKWR) and 123–130 (RGKNRSRK). Residues 90-134 (DPEPGRCRRTDGKKWRCSKEAYPDSKYCEKHMHRGKNRSRKPVEM) enclose the WRC domain. Residues 117 to 176 (CEKHMHRGKNRSRKPVEMSLATPPPPSSSATSAASNSSAGVAPTTTTTSSPAPSYSRPAP) are disordered. Residues 120–129 (HMHRGKNRSR) show a composition bias toward basic residues. Residues 144–174 (SSATSAASNSSAGVAPTTTTTSSPAPSYSRP) are compositionally biased toward low complexity.

It belongs to the GRF family. As to expression, highly expressed in the intercalary meristem of the internode and in the shoot apex. Detected in the leaf primordia and emerging leaves in the uppermost node. Preferentially localized in the epidermis and in the tissues surrounding vascular bundles of the intercalary meristem of the internode and in adventitious roots of the second highest node. Low expression in the coleoptile and in the youngest leaf.

Its subcellular location is the nucleus. Transcription activator that plays a regulatory role in gibberellin-induced stem elongation. The protein is Growth-regulating factor 1 (GRF1) of Oryza sativa subsp. indica (Rice).